The following is a 375-amino-acid chain: Cobalt-precorrin-5B C(1)-methyltransferase (375 aa).

It belongs to the CbiD family.

It carries out the reaction Co-precorrin-5B + S-adenosyl-L-methionine = Co-precorrin-6A + S-adenosyl-L-homocysteine. It participates in cofactor biosynthesis; adenosylcobalamin biosynthesis; cob(II)yrinate a,c-diamide from sirohydrochlorin (anaerobic route): step 6/10. Functionally, catalyzes the methylation of C-1 in cobalt-precorrin-5B to form cobalt-precorrin-6A. The sequence is that of Cobalt-precorrin-5B C(1)-methyltransferase from Paracidovorax citrulli (strain AAC00-1) (Acidovorax citrulli).